We begin with the raw amino-acid sequence, 529 residues long: Delayed-rectifier potassium channel regulatory subunit KCNS1 (529 aa).

The Cytoplasmic portion of the chain corresponds to 1–217 (MLMLLVRGTR…LTMENPGYSL (217 aa)). The chain crosses the membrane as a helical span at residues 218–239 (PSKLFSCVSISVVLASIAAMCI). Residues 240 to 270 (HSLPEYQAREAAAAVAAVAAGRSAEGVRDDP) are Extracellular-facing. Residues 271–293 (VLRRLEYFCIAWFSFEVSSRLLL) traverse the membrane as a helical segment. The Cytoplasmic segment spans residues 294–304 (APSTRNFFCHP). The helical transmembrane segment at 305-322 (LNLIDIVSVLPFYLTLLA) threads the bilayer. At 323–340 (GAALGDHGGTGGKEFGHL) the chain is on the extracellular side. A helical; Voltage-sensor membrane pass occupies residues 341–361 (GKVVQVFRLMRIFRVLKLARH). The Cytoplasmic portion of the chain corresponds to 362-376 (STGLRSLGATLKHSY). A helical transmembrane segment spans residues 377–398 (REVGILLLYLAVGVSVFSGVAY). Residues 399 to 411 (TAEKEEHVGFDTI) lie on the Extracellular side of the membrane. The helical intramembrane region spans 412–423 (PACWWWGTVSMT). The Selectivity filter signature appears at 424-429 (TVGYGD). An intramembrane segment occupies 424–431 (TVGYGDVV). Over 432–438 (PVTVAGK) the chain is Extracellular. Residues 439–467 (LAASGCILGGILVVALPITIIFNKFSHFY) traverse the membrane as a helical segment. Residues 468–529 (RRQKALEAAV…PSEPPHSQMY (62 aa)) lie on the Cytoplasmic side of the membrane. Residues 494–529 (GVSEASLETSRETSQEGRSADLETQVPSEPPHSQMY) form a disordered region. Residues 502–514 (TSRETSQEGRSAD) show a composition bias toward basic and acidic residues.

This sequence belongs to the potassium channel family. S (TC 1.A.1.2) subfamily. Kv9.1/KCNS1 sub-subfamily. In terms of assembly, heterotetramer with KCNB1. Heterotetramer with KCNB2. Does not form homomultimers.

It is found in the cell membrane. In terms of biological role, potassium channel regulatory subunit that modulate the delayed rectifier voltage-gated potassium channel activity of KCNB1 and KCNB2 by altering their kinetics, expression levels, and shifting the half-inactivation potential to more polarized values. While it does not form functional channels on its own, it can form functional heterotetrameric channels with KCNB1 and KCNB2. Each regulatory subunit has unique regulatory properties that can lead to extensive inhibition, significant changes in kinetics, and/or substantial shifts in the voltage dependencies of the inactivation process. This Aotus nancymaae (Ma's night monkey) protein is Delayed-rectifier potassium channel regulatory subunit KCNS1.